Consider the following 456-residue polypeptide: Bifunctional protein GlmU (456 aa).

The segment at 1–229 (MTKKALSAVI…VMEVEGANNR (229 aa)) is pyrophosphorylase. UDP-N-acetyl-alpha-D-glucosamine-binding positions include 11–14 (LAAG), Lys25, Gln76, 81–82 (GT), 103–105 (YGD), Gly140, Glu154, Asn169, and Asn227. Asp105 is a Mg(2+) binding site. Position 227 (Asn227) interacts with Mg(2+). Residues 230–250 (LQLAALERYLQNKQASKLLLE) form a linker region. The interval 251–456 (GVMIYDPARF…QGWQRPIKKK (206 aa)) is N-acetyltransferase. UDP-N-acetyl-alpha-D-glucosamine is bound by residues Arg333 and Lys351. The Proton acceptor role is filled by His363. Tyr366 and Asn377 together coordinate UDP-N-acetyl-alpha-D-glucosamine. Acetyl-CoA contacts are provided by residues Ala380, 386–387 (NY), Ser405, Ala423, and Arg440.

In the N-terminal section; belongs to the N-acetylglucosamine-1-phosphate uridyltransferase family. It in the C-terminal section; belongs to the transferase hexapeptide repeat family. In terms of assembly, homotrimer. The cofactor is Mg(2+).

It localises to the cytoplasm. The enzyme catalyses alpha-D-glucosamine 1-phosphate + acetyl-CoA = N-acetyl-alpha-D-glucosamine 1-phosphate + CoA + H(+). It catalyses the reaction N-acetyl-alpha-D-glucosamine 1-phosphate + UTP + H(+) = UDP-N-acetyl-alpha-D-glucosamine + diphosphate. It participates in nucleotide-sugar biosynthesis; UDP-N-acetyl-alpha-D-glucosamine biosynthesis; N-acetyl-alpha-D-glucosamine 1-phosphate from alpha-D-glucosamine 6-phosphate (route II): step 2/2. Its pathway is nucleotide-sugar biosynthesis; UDP-N-acetyl-alpha-D-glucosamine biosynthesis; UDP-N-acetyl-alpha-D-glucosamine from N-acetyl-alpha-D-glucosamine 1-phosphate: step 1/1. It functions in the pathway bacterial outer membrane biogenesis; LPS lipid A biosynthesis. Its function is as follows. Catalyzes the last two sequential reactions in the de novo biosynthetic pathway for UDP-N-acetylglucosamine (UDP-GlcNAc). The C-terminal domain catalyzes the transfer of acetyl group from acetyl coenzyme A to glucosamine-1-phosphate (GlcN-1-P) to produce N-acetylglucosamine-1-phosphate (GlcNAc-1-P), which is converted into UDP-GlcNAc by the transfer of uridine 5-monophosphate (from uridine 5-triphosphate), a reaction catalyzed by the N-terminal domain. This is Bifunctional protein GlmU from Haemophilus influenzae (strain PittGG).